We begin with the raw amino-acid sequence, 311 residues long: Mediator of RNA polymerase II transcription subunit 27 (311 aa).

Phosphoserine is present on Ser132. N6-methyllysine is present on Lys134.

It belongs to the Mediator complex subunit 27 family. Component of the Mediator complex, which is composed of MED1, MED4, MED6, MED7, MED8, MED9, MED10, MED11, MED12, MED13, MED13L, MED14, MED15, MED16, MED17, MED18, MED19, MED20, MED21, MED22, MED23, MED24, MED25, MED26, MED27, MED29, MED30, MED31, CCNC, CDK8 and CDC2L6/CDK11. The MED12, MED13, CCNC and CDK8 subunits form a distinct module termed the CDK8 module. Mediator containing the CDK8 module is less active than Mediator lacking this module in supporting transcriptional activation. Individual preparations of the Mediator complex lacking one or more distinct subunits have been variously termed ARC, CRSP, DRIP, PC2, SMCC and TRAP.

It localises to the nucleus. Component of the Mediator complex, a coactivator involved in the regulated transcription of nearly all RNA polymerase II-dependent genes. Mediator functions as a bridge to convey information from gene-specific regulatory proteins to the basal RNA polymerase II transcription machinery. Mediator is recruited to promoters by direct interactions with regulatory proteins and serves as a scaffold for the assembly of a functional preinitiation complex with RNA polymerase II and the general transcription factors. The sequence is that of Mediator of RNA polymerase II transcription subunit 27 (MED27) from Homo sapiens (Human).